The sequence spans 180 residues: Protein SPO16 homolog (180 aa).

In terms of assembly, homooligomer. Interacts with SHOC, SYCP1 and SYCE3.

Its subcellular location is the chromosome. In terms of biological role, plays a key role in reinforcing the integrity of the central element of the synaptonemal complex (SC) thereby stabilizing SC, ensuring progression of meiotic prophase I in male and female germ cells. Promotes homologous recombination and crossing-over in meiotic prophase I via its association with SHOC1. Required for the localization of TEX11 and MSH4 to recombination intermediates. The protein is Protein SPO16 homolog of Homo sapiens (Human).